We begin with the raw amino-acid sequence, 454 residues long: MSFVPGQENAGSRSSSGNRAGNGILKKTTWADQTERGQNNGNRGRRNQPKQTATTQPNTGSVVPHYSWFSGITQFQKGKEFQFAGGQGVPIANGIPPSEQKGYWYRHNRRSFKTPDGQQKQLLPRWYFYYLGTGPHAGASFGDSIEGVFWVANSQADTNTSADIVERDPSSHEAIPTRFAPGTVLPQGFYVEGSGRSAPASRSGSRSQSRGPNNRARSSSNQRQPASTVKPDMAEEIAALVLAKLGKDAGQPKQVTKQSAKEVRQKILNKPRQKRTPNKQCPVQQCFGKRGPNQNFGGPEMLKLGTSDPQFPILAELAPTPGAFFFGSKLELVKKNSGGVDEPTKDVYELQYSGAVRFDSTLPGFETIMKVLNENLNAYQNQAGGADVVSPKPQRKRGTKQTAQKEELDSISVAKPKSAVQRNVSRELTPEDRSLLAQILDDGVVPDGLDDSNV.

The tract at residues 1-62 is disordered; sequence MSFVPGQENA…ATTQPNTGSV (62 aa). Residues 9–23 are compositionally biased toward low complexity; the sequence is NAGSRSSSGNRAGNG. A compositionally biased stretch (polar residues) spans 49 to 61; sequence PKQTATTQPNTGS. The segment at 56–197 is RNA-binding; that stretch reads QPNTGSVVPH…GFYVEGSGRS (142 aa). The 130-residue stretch at 64-193 folds into the CoV N NTD domain; it reads PHYSWFSGIT…VLPQGFYVEG (130 aa). 3 residues coordinate RNA: R109, R125, and R167. Position 170 is a phosphoserine; by host (S170). T177 carries the post-translational modification Phosphothreonine; by host. 3 disordered regions span residues 186-230, 271-290, and 383-428; these read PQGF…STVK, PRQK…FGKR, and AGGA…SREL. Residues 193-212 are compositionally biased toward low complexity; sequence GSGRSAPASRSGSRSQSRGP. Position 194 is a phosphoserine; by host (S194). Residues 215–227 show a composition bias toward polar residues; it reads RARSSSNQRQPAS. In terms of domain architecture, CoV N CTD spans 260-383; it reads AKEVRQKILN…ENLNAYQNQA (124 aa). A dimerization region spans residues 267 to 384; sequence ILNKPRQKRT…NLNAYQNQAG (118 aa). Residues S390 and S425 each carry the phosphoserine; by host modification. T429 is modified (phosphothreonine; by host).

It belongs to the betacoronavirus nucleocapsid protein family. In terms of assembly, homooligomer. Both monomeric and oligomeric forms interact with RNA. Interacts with protein M. Interacts with NSP3; this interaction serves to tether the genome to the newly translated replicase-transcriptase complex at a very early stage of infection. ADP-ribosylated. The ADP-ribosylation is retained in the virion during infection. In terms of processing, phosphorylated on serine and threonine residues.

It is found in the virion. It localises to the host endoplasmic reticulum-Golgi intermediate compartment. The protein localises to the host Golgi apparatus. Its function is as follows. Packages the positive strand viral genome RNA into a helical ribonucleocapsid (RNP) and plays a fundamental role during virion assembly through its interactions with the viral genome and membrane protein M. Plays an important role in enhancing the efficiency of subgenomic viral RNA transcription as well as viral replication. This is Nucleoprotein from Rattus norvegicus (Rat).